Consider the following 304-residue polypeptide: uncharacterized protein (304 aa).

A compositionally biased stretch (polar residues) spans 226–244; that stretch reads SRNSESSRQSNLNSPNDSV. Residues 226 to 263 form a disordered region; the sequence is SRNSESSRQSNLNSPNDSVKFNEFNKSNKSTKTNPNNI. Residues 246 to 262 are compositionally biased toward low complexity; it reads FNEFNKSNKSTKTNPNN.

This is an uncharacterized protein from Acanthamoeba polyphaga (Amoeba).